We begin with the raw amino-acid sequence, 219 residues long: Probable oxidoreductase virH (219 aa).

This sequence belongs to the oxidoreductase OpS7 family.

It functions in the pathway secondary metabolite biosynthesis. In terms of biological role, probable oxidoreductase; part of the gene cluster that mediates the biosynthesis of virensols and trichoxide, fungal natural products that contain or are derived from a salicylaldehyde core. The pathway begins with the synthesis of the reduced chain in virensol C by the highly reducing polyketide synthase virA via condensation of one acetate and 8 malonate units. VirA has interesting programming rules since the first 2 ketides are fully reduced, the 3 following ketides undergo beta-dehydration, and the last 3 ketides are only reduced to beta-hydroxys to yield the trihydroxy portion. The production of aldehyde virensol C by virA alone is surprising, since virA does not contain a reductase (R) domain that is typically associated with reductive product release in HRPKS. The cupin-domain enzyme virC is involved in enhancing virA product turnover. The short-chain dehydrogenase virB then oxidizes the C-7 alcohol of virensol C to a ketone, yielding virensol D. Virensol D is further transformed to salicylaldehyde 5-deoxyaurocitrin by the short-chain dehydrogenase virD. VirD catalyzes the dehydrogenation of C-3 to form the beta-ketone aldehyde, which is followed by the generation of the nucleophilic C-2 that is required for the intramolecular aldol condensation between C-2 and C-7, itself followed by dehydration and aromatization which leads to salicylaldehyde 5-deoxyaurocitrin. While the dehydrogenation of virensol D is definitely catalyzed by virD, the aldol condensation and dehydration may be uncatalyzed or assisted by virD. The short chain dehydrogenase virG then converts salicylaldehyde 5-deoxyaurocitrin into virensol B which is further hydroxylated by the cytochrome P450 monooxygenase virE to yield the hydroquinone virensol A. VirI then may oxidize virensol A to form the quinone, while virH performs the epoxidation. Finally, the two remaining short-chain dehydrogenases, virK and virL, are probably responsible for reducing the ketones to the corresponding alcohols to furnish the epoxycyclohexanol structure in trichoxide. The protein is Probable oxidoreductase virH of Hypocrea virens (strain Gv29-8 / FGSC 10586) (Gliocladium virens).